Consider the following 168-residue polypeptide: NAD(P)H-quinone oxidoreductase subunit J, chloroplastic (168 aa).

The protein belongs to the complex I 30 kDa subunit family. In terms of assembly, NDH is composed of at least 16 different subunits, 5 of which are encoded in the nucleus.

Its subcellular location is the plastid. It is found in the chloroplast thylakoid membrane. The catalysed reaction is a plastoquinone + NADH + (n+1) H(+)(in) = a plastoquinol + NAD(+) + n H(+)(out). It carries out the reaction a plastoquinone + NADPH + (n+1) H(+)(in) = a plastoquinol + NADP(+) + n H(+)(out). In terms of biological role, NDH shuttles electrons from NAD(P)H:plastoquinone, via FMN and iron-sulfur (Fe-S) centers, to quinones in the photosynthetic chain and possibly in a chloroplast respiratory chain. The immediate electron acceptor for the enzyme in this species is believed to be plastoquinone. Couples the redox reaction to proton translocation, and thus conserves the redox energy in a proton gradient. The protein is NAD(P)H-quinone oxidoreductase subunit J, chloroplastic of Chaetosphaeridium globosum (Charophycean green alga).